The sequence spans 393 residues: Flavohemoprotein (393 aa).

Positions 1 to 139 (MLSAEHRAIV…LADLLIGLEE (139 aa)) constitute a Globin domain. His-85 contributes to the heme b binding site. Residues Tyr-95 and Glu-138 each act as charge relay system in the active site. The interval 150–393 (GGWRGTRAFV…EFFGPASALD (244 aa)) is reductase. The FAD-binding FR-type domain occupies 153 to 256 (RGTRAFVVAR…LTPSGDFTLE (104 aa)). Residues Tyr-191 and 205 to 208 (RNYS) contribute to the FAD site. 268-273 (GVGITP) contacts NADP(+). 385–388 (FFGP) is an FAD binding site.

This sequence belongs to the globin family. Two-domain flavohemoproteins subfamily. It in the C-terminal section; belongs to the flavoprotein pyridine nucleotide cytochrome reductase family. The cofactor is heme b. FAD is required as a cofactor.

It carries out the reaction 2 nitric oxide + NADPH + 2 O2 = 2 nitrate + NADP(+) + H(+). The catalysed reaction is 2 nitric oxide + NADH + 2 O2 = 2 nitrate + NAD(+) + H(+). Is involved in NO detoxification in an aerobic process, termed nitric oxide dioxygenase (NOD) reaction that utilizes O(2) and NAD(P)H to convert NO to nitrate, which protects the bacterium from various noxious nitrogen compounds. Therefore, plays a central role in the inducible response to nitrosative stress. This chain is Flavohemoprotein, found in Burkholderia sp. (strain TH2).